Here is a 974-residue protein sequence, read N- to C-terminus: UvrABC system protein A (974 aa).

34–41 (GLSGSGKS) lines the ATP pocket. 2 consecutive ABC transporter domains span residues 331-610 (WARS…TNSL) and 630-959 (ISKT…QFLK). 663–670 (GVSGGGKS) serves as a coordination point for ATP. A C4-type zinc finger spans residues 762–788 (CEACQGDGVIKIEMHFLPDVYVTCDVC).

This sequence belongs to the ABC transporter superfamily. UvrA family. As to quaternary structure, forms a heterotetramer with UvrB during the search for lesions.

The protein resides in the cytoplasm. Its function is as follows. The UvrABC repair system catalyzes the recognition and processing of DNA lesions. UvrA is an ATPase and a DNA-binding protein. A damage recognition complex composed of 2 UvrA and 2 UvrB subunits scans DNA for abnormalities. When the presence of a lesion has been verified by UvrB, the UvrA molecules dissociate. In Brucella suis biovar 1 (strain 1330), this protein is UvrABC system protein A.